A 546-amino-acid polypeptide reads, in one-letter code: Delta-1-pyrroline-5-carboxylate dehydrogenase (546 aa).

279 to 284 serves as a coordination point for NAD(+); sequence KDISSN. The active-site Proton acceptor is Glu-297. The active-site Nucleophile is the Cys-331.

The protein belongs to the aldehyde dehydrogenase family.

It localises to the cytoplasm. The enzyme catalyses L-glutamate 5-semialdehyde + NAD(+) + H2O = L-glutamate + NADH + 2 H(+). It participates in amino-acid degradation; L-proline degradation into L-glutamate; L-glutamate from L-proline: step 2/2. In Agaricus bisporus (White button mushroom), this protein is Delta-1-pyrroline-5-carboxylate dehydrogenase (pruA).